The sequence spans 297 residues: MNLGTLVSETRNPQTMDLDALPTPELVKRFNEQDTRVAEAVKATLPDVARAVDAAAAALKSGGRIIYMGAGTSGRLGVLDASECPPTFGVPHGLVVGLIAGGPGALLKAVEGAEDSQQAGEDDLVALNLQEQDLVVGLAASGRTPYVIGGLRYARQSGCTTVAVSCNPDSPIAREANIAISPVVGPEALTGSTRLKSGTAQKMVLNMISTGAMVKFGKVYQNLMVDMKATNVKLVDRACRMVVEATGIGREEAEALLKQTDFEVKPAILMALTGLDAAAAREKLAAHQGFLRAALEH.

The 164-residue stretch at 55–218 (AAAALKSGGR…STGAMVKFGK (164 aa)) folds into the SIS domain. Glu-83 serves as the catalytic Proton donor. Glu-114 is a catalytic residue.

It belongs to the GCKR-like family. MurNAc-6-P etherase subfamily. As to quaternary structure, homodimer.

It carries out the reaction N-acetyl-D-muramate 6-phosphate + H2O = N-acetyl-D-glucosamine 6-phosphate + (R)-lactate. It participates in amino-sugar metabolism; 1,6-anhydro-N-acetylmuramate degradation. Its pathway is amino-sugar metabolism; N-acetylmuramate degradation. The protein operates within cell wall biogenesis; peptidoglycan recycling. Its function is as follows. Specifically catalyzes the cleavage of the D-lactyl ether substituent of MurNAc 6-phosphate, producing GlcNAc 6-phosphate and D-lactate. Together with AnmK, is also required for the utilization of anhydro-N-acetylmuramic acid (anhMurNAc) either imported from the medium or derived from its own cell wall murein, and thus plays a role in cell wall recycling. The protein is N-acetylmuramic acid 6-phosphate etherase of Salmonella choleraesuis (strain SC-B67).